A 314-amino-acid polypeptide reads, in one-letter code: Replication initiation protein (314 aa).

A compositionally biased stretch (polar residues) spans 1-10 (MSKNNHANHS). A disordered region spans residues 1–25 (MSKNNHANHSNHLENHDLDNFSKTG). Positions 11-20 (NHLENHDLDN) are enriched in basic and acidic residues.

Belongs to the plasmid replication initiation factor family.

Functionally, this protein is probably a specific topoisomerase involved in initiating replication. This protein is specifically required and may be rate-limiting for replication of the plasmid in vivo. The sequence is that of Replication initiation protein (repN) from Staphylococcus aureus.